A 742-amino-acid polypeptide reads, in one-letter code: Eukaryotic translation initiation factor 3 subunit B (742 aa).

Over residues 1-10 (MAPSFDTLSE) the composition is skewed to polar residues. A disordered region spans residues 1-20 (MAPSFDTLSEQDLHEEEEEE). Residues 40–126 (TFVVIDGLPI…HTLAVNKLMD (87 aa)) form the RRM domain. 5 WD repeats span residues 193–230 (AHWTQLFVQWSPKGTYLASVHPQGIQLWGGPAFSKLKQ), 232–290 (PHPF…RSFV), 304–345 (QPKK…LLGK), 515–558 (IEKK…EKPE), and 573–611 (VEHYGVTDVDWDPTGRYVVSSASVWTHSMENGWNLHTFA).

The protein belongs to the eIF-3 subunit B family. In terms of assembly, component of the eukaryotic translation initiation factor 3 (eIF-3) complex.

Its subcellular location is the cytoplasm. Functionally, RNA-binding component of the eukaryotic translation initiation factor 3 (eIF-3) complex, which is involved in protein synthesis of a specialized repertoire of mRNAs and, together with other initiation factors, stimulates binding of mRNA and methionyl-tRNAi to the 40S ribosome. The eIF-3 complex specifically targets and initiates translation of a subset of mRNAs involved in cell proliferation. The polypeptide is Eukaryotic translation initiation factor 3 subunit B (prt1) (Aspergillus terreus (strain NIH 2624 / FGSC A1156)).